The primary structure comprises 458 residues: Bifunctional protein GlmU (458 aa).

The interval 1-224 is pyrophosphorylase; sequence MTVIALAAGK…PKVAVGVNNQ (224 aa). Residues 6–9, K20, Q71, and 76–77 contribute to the UDP-N-acetyl-alpha-D-glucosamine site; these read LAAG and GT. Position 99 (D99) interacts with Mg(2+). G136, E150, N165, and N222 together coordinate UDP-N-acetyl-alpha-D-glucosamine. N222 contacts Mg(2+). The tract at residues 225–245 is linker; it reads LELARATRLLFKRKALRLMED. Residues 246–458 form an N-acetyltransferase region; it reads GVLMIDPRTV…TAETEEKEQV (213 aa). UDP-N-acetyl-alpha-D-glucosamine is bound by residues R328 and K346. H358 functions as the Proton acceptor in the catalytic mechanism. The UDP-N-acetyl-alpha-D-glucosamine site is built by Y361 and N372. Acetyl-CoA-binding positions include 381–382, S401, S419, and R436; that span reads NY.

It in the N-terminal section; belongs to the N-acetylglucosamine-1-phosphate uridyltransferase family. In the C-terminal section; belongs to the transferase hexapeptide repeat family. Homotrimer. Mg(2+) serves as cofactor.

The protein resides in the cytoplasm. The catalysed reaction is alpha-D-glucosamine 1-phosphate + acetyl-CoA = N-acetyl-alpha-D-glucosamine 1-phosphate + CoA + H(+). The enzyme catalyses N-acetyl-alpha-D-glucosamine 1-phosphate + UTP + H(+) = UDP-N-acetyl-alpha-D-glucosamine + diphosphate. Its pathway is nucleotide-sugar biosynthesis; UDP-N-acetyl-alpha-D-glucosamine biosynthesis; N-acetyl-alpha-D-glucosamine 1-phosphate from alpha-D-glucosamine 6-phosphate (route II): step 2/2. The protein operates within nucleotide-sugar biosynthesis; UDP-N-acetyl-alpha-D-glucosamine biosynthesis; UDP-N-acetyl-alpha-D-glucosamine from N-acetyl-alpha-D-glucosamine 1-phosphate: step 1/1. It functions in the pathway bacterial outer membrane biogenesis; LPS lipid A biosynthesis. Functionally, catalyzes the last two sequential reactions in the de novo biosynthetic pathway for UDP-N-acetylglucosamine (UDP-GlcNAc). The C-terminal domain catalyzes the transfer of acetyl group from acetyl coenzyme A to glucosamine-1-phosphate (GlcN-1-P) to produce N-acetylglucosamine-1-phosphate (GlcNAc-1-P), which is converted into UDP-GlcNAc by the transfer of uridine 5-monophosphate (from uridine 5-triphosphate), a reaction catalyzed by the N-terminal domain. In Bdellovibrio bacteriovorus (strain ATCC 15356 / DSM 50701 / NCIMB 9529 / HD100), this protein is Bifunctional protein GlmU.